We begin with the raw amino-acid sequence, 504 residues long: Acetylcholine receptor subunit epsilon (504 aa).

Positions 1–19 (MESGVRILSLLILLHNSLA) are cleaved as a signal peptide. Residues 20–240 (SESEESRLIK…IVFNLIIQRK (221 aa)) lie on the Extracellular side of the membrane. Residues Asn88 and Asn161 are each glycosylated (N-linked (GlcNAc...) asparagine). Cys148 and Cys162 are oxidised to a cystine. A helical transmembrane segment spans residues 241 to 265 (PLFYIINIIVPCVLISFLVVLVYFL). The Cytoplasmic segment spans residues 266 to 273 (PAKAGGQK). The helical transmembrane segment at 274–292 (CTVSISVLLAQTVFLFLIA) threads the bilayer. The Extracellular segment spans residues 293–307 (QMVPETSLSVPLIGK). The chain crosses the membrane as a helical span at residues 308 to 329 (YLMFVMFVSTLIVLSCVIVLNV). Residues 330-473 (SLRSPSTHNL…WILIGKVLDV (144 aa)) lie on the Cytoplasmic side of the membrane. The chain crosses the membrane as a helical span at residues 474-497 (LCFWVALPLFVLGTLAIFLMGHFN). The Extracellular portion of the chain corresponds to 498 to 504 (TAPEHPF).

It belongs to the ligand-gated ion channel (TC 1.A.9) family. Acetylcholine receptor (TC 1.A.9.1) subfamily. Epsilon/CHRNE sub-subfamily. In terms of assembly, pentamer of two alpha chains, and one each of the beta, delta, and gamma (in immature muscle) or epsilon (in mature muscle) chains.

It is found in the postsynaptic cell membrane. It localises to the cell membrane. It carries out the reaction K(+)(in) = K(+)(out). The catalysed reaction is Na(+)(in) = Na(+)(out). Functionally, after binding acetylcholine, the AChR responds by an extensive change in conformation that affects all subunits and leads to opening of an ion-conducting channel across the plasma membrane. The protein is Acetylcholine receptor subunit epsilon (chrne) of Xenopus laevis (African clawed frog).